A 358-amino-acid polypeptide reads, in one-letter code: MSCQAFSADSFTTLAGDSLPLLMHHASAADCLPSSASTHTHNMVSAVPSGLSLLQSSKRSHMHLSTSTLGNALSNGPPGLHYPVTPCHYSNQQTTYGMMAAQEMLSASISQTRILQTCSVPHPNMVNGANTLQGSLAPCLYKFPEHGLGGGSCSLSHSFPPLPPAVLSEEPPLGGTKDLRLRSRPPDDPPDMDSPQIRELEKFANDFKLRRIKLGYTQTNVGEALAAVHGSEFSQTTICRFENLQLSFKNACTLKAILAKWLDEAEQAGALFNEKMGMNERKRKRRTTISLGAKEALERSFGEKIKPSSQEIVRMAEGLHLEKEVVRVWFCNRRQREKRVKTSLHHSSYLTKDSPTYR.

The 9aaTAD motif lies at 5-12 (AFSADSFT). The interval 164–195 (PAVLSEEPPLGGTKDLRLRSRPPDDPPDMDSP) is disordered. Residues 177 to 187 (KDLRLRSRPPD) are compositionally biased toward basic and acidic residues. The POU-specific domain maps to 192-266 (MDSPQIRELE…ILAKWLDEAE (75 aa)). The segment at residues 282–341 (KRKRRTTISLGAKEALERSFGEKIKPSSQEIVRMAEGLHLEKEVVRVWFCNRRQREKRVK) is a DNA-binding region (homeobox).

Belongs to the POU transcription factor family. Class-1 subfamily.

It is found in the nucleus. Functionally, transcription factor that activates growth hormone and prolactin genes. Specifically binds to the consensus sequence 5'-TAAAT-3'. In Oncorhynchus mykiss (Rainbow trout), this protein is Pituitary-specific positive transcription factor 1 (pou1f1).